We begin with the raw amino-acid sequence, 47 residues long: Potassium channel toxin TcoKIK (47 aa).

The BetaSPN-type CS-alpha/beta domain occupies 14–47; it reads EYACPAIDKFCEDHCAAKKAVGKCDDFKCNCIKL. 3 disulfide bridges follow: Cys-17-Cys-37, Cys-24-Cys-42, and Cys-28-Cys-44.

It belongs to the long chain scorpion toxin family. Class 2 subfamily. Expressed by the venom gland.

It localises to the secreted. Its subcellular location is the target cell membrane. In terms of biological role, blocks voltage-gated potassium channels. Its application (10 uM) to cells recombinantly expressing channels results in membrane damage and cell lysis. This chain is Potassium channel toxin TcoKIK, found in Tityus costatus (Brazilian scorpion).